The primary structure comprises 316 residues: L-lactate dehydrogenase 3 (316 aa).

NAD(+)-binding residues include Val16, Asp37, Arg42, and Tyr68. Arg91 serves as a coordination point for substrate. Residues Ser104, 121–123 (ASN), and Thr146 each bind NAD(+). 123–126 (NPVD) is a binding site for substrate. 151-154 (DSSR) serves as a coordination point for substrate. Positions 156 and 171 each coordinate beta-D-fructose 1,6-bisphosphate. Catalysis depends on His178, which acts as the Proton acceptor. A substrate-binding site is contributed by Thr233.

The protein belongs to the LDH/MDH superfamily. LDH family. Homotetramer.

The protein resides in the cytoplasm. The catalysed reaction is (S)-lactate + NAD(+) = pyruvate + NADH + H(+). The protein operates within fermentation; pyruvate fermentation to lactate; (S)-lactate from pyruvate: step 1/1. Allosterically activated by fructose 1,6-bisphosphate (FBP). In terms of biological role, catalyzes the conversion of lactate to pyruvate. This Bacillus thuringiensis subsp. konkukian (strain 97-27) protein is L-lactate dehydrogenase 3.